Reading from the N-terminus, the 103-residue chain is NADH-quinone oxidoreductase subunit K (103 aa).

The next 3 membrane-spanning stretches (helical) occupy residues 5–25 (VPTSYYLALSGVLFALGLIGV), 32–52 (ILIFLSVELMLNAANIALVAF), and 66–86 (FIVMTLAAAEVAIGLAIIVAI).

This sequence belongs to the complex I subunit 4L family. NDH-1 is composed of 15 different subunits. Subunits NuoA, H, J, K, L, M, N constitute the membrane sector of the complex.

Its subcellular location is the cell membrane. The enzyme catalyses a quinone + NADH + 5 H(+)(in) = a quinol + NAD(+) + 4 H(+)(out). Its function is as follows. NDH-1 shuttles electrons from NADH, via FMN and iron-sulfur (Fe-S) centers, to quinones in the respiratory chain. The immediate electron acceptor for the enzyme in this species is believed to be a menaquinone. Couples the redox reaction to proton translocation (for every two electrons transferred, four hydrogen ions are translocated across the cytoplasmic membrane), and thus conserves the redox energy in a proton gradient. The chain is NADH-quinone oxidoreductase subunit K from Deinococcus radiodurans (strain ATCC 13939 / DSM 20539 / JCM 16871 / CCUG 27074 / LMG 4051 / NBRC 15346 / NCIMB 9279 / VKM B-1422 / R1).